The chain runs to 94 residues: Conotoxin Qc6.1 (94 aa).

Residues Met1–Ala22 form the signal peptide. A propeptide spanning residues Val23–Asn62 is cleaved from the precursor. 3 cysteine pairs are disulfide-bonded: Cys66–Cys84, Cys73–Cys88, and Cys83–Cys92.

Belongs to the conotoxin O1 superfamily. In terms of tissue distribution, expressed by the venom duct.

Its subcellular location is the secreted. The protein is Conotoxin Qc6.1 of Conus quercinus (Oak cone).